A 602-amino-acid polypeptide reads, in one-letter code: Probable HECT-type ubiquitin ligase-interacting protein creD (602 aa).

2 disordered regions span residues E375–S398 and T457–P499. The span at P463–P475 shows a compositional bias: low complexity. Residues L477–I492 are compositionally biased toward basic and acidic residues.

This sequence belongs to the arrestin family. Interacts with hulA.

Functionally, component of the regulatory network controlling carbon source utilization through ubiquitination and deubiquitination involving creA, creB, creC, creD and acrB. May be involved in signaling by recognizing appropriately phosphorylated substrates via its arrestin domains and then recruit a HECT-type ubiquitin ligase such as hulA, leading to ubiquitination of the substrate, providing a link between ubiquitination and phosphorylation in protein regulation and stability. The chain is Probable HECT-type ubiquitin ligase-interacting protein creD (creD) from Aspergillus clavatus (strain ATCC 1007 / CBS 513.65 / DSM 816 / NCTC 3887 / NRRL 1 / QM 1276 / 107).